The primary structure comprises 1273 residues: MADQRSKTNRWNWEVSGFEPRKSSSNASFAESTGHRTTGPLLRRNSISTPSLPPKQAIASKVNGLKEKVKLAKEDYLELRQEATDLQEYSNAKLDRVTRYLGVLAEKSRKLDQFVLETEARISPLINEKKRLFNDLLTAKGNIKVFCRARPLFEDEGPSVIEFPGDCTICVNTSDDTLSNPKKDFEFDRVYGPHVGQAALFSDVQPFVQSALDGSNVSILSYGQTNAGKTYTMEGSNHDRGLYARCFEELFDLANSDSTSTSRFSFSLSVFEIYNEQIRDLLSETQSNLPNINMDLHESVIELGQEKVDNPLEFLGVLKSAFLNRGNYKSKFNVTHLIVSIHIYYSNTITGENIYSKLSLVDLAGSEGLIMENDSGDHVTDLLHVMNSISALGDVLSSLTSGKDSIPYDNSILTRVLADSLGGSSKTLMIVNICPSVQTLSETISCLNYAARARNTVPSLGNRDTIKKWRDVASDARKELLEKERENQNLKQEVVGLKKALKDANDQCVLLYSEVQRAWKVSFTLQSDLKSENIMLVDKHRLEKEQNSQLRNQIAQFLQLDQEQKLQMQQQDSAIQNLQAKITDLESQVSEAVRSDTTRTGDALQSQDIFSPIPKAVEGTTDSSSVTKKLEEELKKRDALIERLHEENEKLFDRLTERSMAVSTQVLSPSLRASPNIQPANVNRGEGYSAEAVALPSTPNKNNGAITLVKSGTDLVKTTPAGEYLTAALNDFDPEEYEGLAAIADGANKLLMLVLAAVIKAGASREHEILAEIRDSVFSFIRKMEPRRVMDTMLVSRVRILYIRSLLARSPELQTIRVSPVECFLEKPNTGRSKSTSRGSSPGRSPVRYLDTQIHGFKVNIKAERRNKLASVVSRMRGLEQDAGRQQVTGVKLREMQDEAKSFAIGNKALAALFVHTPAGELQRQIRLWLAENFEFLSVTSDDVSGGNGGQLELLSTAIMDGWMAGLGAAVPPHTDALGQLLSEYAKRVYTSQMQHMKDIAGTLAAEEAEDAGQVSKLRSALESVDHKRRKILQQMKSDAALLNLEEGSSPIPNPSTAAEDSRLASLISLDGILKQVKEITRQASVHVLSKSKKKALLESLDELTERMPSLLDIDHPCAQREIATAHQLVETIPEQEDTNILEQSHDRRPSLESISSGETDVSQWNVLQFNTGSSAPFIIKCGGNNNSELVIKADARVQEPKGGEIVRVVPRPSVLVNMSLEEMKQMFVQLPEALSLLALARTADGTRARYSRLYKTLAMKVPSLKDLVSELE.

The tract at residues 1–52 (MADQRSKTNRWNWEVSGFEPRKSSSNASFAESTGHRTTGPLLRRNSISTPSL) is disordered. Residues 59–89 (ASKVNGLKEKVKLAKEDYLELRQEATDLQEY) are a coiled coil. The 315-residue stretch at 142–456 (NIKVFCRARP…LNYAARARNT (315 aa)) folds into the Kinesin motor domain. Position 223-230 (223-230 (GQTNAGKT)) interacts with ATP. 3 coiled-coil regions span residues 466–511 (IKKW…CVLL), 559–595 (QLDQ…AVRS), and 627–657 (TKKL…RLTE). Disordered regions lie at residues 827 to 847 (KPNT…RSPV) and 1136 to 1157 (QEDT…SISS). Positions 830–846 (TGRSKSTSRGSSPGRSP) are enriched in low complexity.

The protein belongs to the TRAFAC class myosin-kinesin ATPase superfamily. Kinesin family. KIN-14 subfamily. In terms of assembly, homodimer and heterodimer with KCA2. Interacts with CDKA-1. Interacts with AL1, a geminivirus (TGMV) protein essential for viral replication. Interacts with LUE1/KSS. In terms of processing, part of the phosphorylation is not CDK-dependent. As to expression, widely expressed.

It localises to the nucleus. It is found in the cytoplasm. The protein resides in the cytoskeleton. The protein localises to the spindle. Its subcellular location is the chromosome. It localises to the cell membrane. It is found in the phragmoplast. Functionally, kinesin-like protein required for chloroplast movements and anchor to the plasma membrane. Mediates chloroplast movement via chloroplast actin (cp-actin) filaments. Required for the chloroplast avoidance response under high intensity blue light. Mediates redundantly with CHUP1 the nuclear avoidance response under high intensity blue light. May act as a mitotic kinesin. Probably involved in division plane determination. The polypeptide is Kinesin-like protein KIN-14A (Arabidopsis thaliana (Mouse-ear cress)).